A 189-amino-acid polypeptide reads, in one-letter code: Peptidyl-tRNA hydrolase (189 aa).

Residue Tyr-14 coordinates tRNA. Catalysis depends on His-19, which acts as the Proton acceptor. The tRNA site is built by Tyr-64, Asn-66, and Asn-112.

It belongs to the PTH family. In terms of assembly, monomer.

The protein localises to the cytoplasm. The catalysed reaction is an N-acyl-L-alpha-aminoacyl-tRNA + H2O = an N-acyl-L-amino acid + a tRNA + H(+). Its function is as follows. Hydrolyzes ribosome-free peptidyl-tRNAs (with 1 or more amino acids incorporated), which drop off the ribosome during protein synthesis, or as a result of ribosome stalling. In terms of biological role, catalyzes the release of premature peptidyl moieties from peptidyl-tRNA molecules trapped in stalled 50S ribosomal subunits, and thus maintains levels of free tRNAs and 50S ribosomes. In Clostridium botulinum (strain Kyoto / Type A2), this protein is Peptidyl-tRNA hydrolase.